We begin with the raw amino-acid sequence, 53 residues long: uncharacterized protein (53 aa).

It is found in the mitochondrion matrix. The protein localises to the kinetoplast. This is an uncharacterized protein from Trypanosoma brucei brucei.